We begin with the raw amino-acid sequence, 137 residues long: uncharacterized protein (137 aa).

A signal peptide spans 1–19 (MVAFYGIFLFGTVYLFGLA).

This is an uncharacterized protein from Acanthamoeba polyphaga (Amoeba).